We begin with the raw amino-acid sequence, 116 residues long: Immunoglobulin heavy variable 3-66 (116 aa).

The first 19 residues, 1–19 (MEFGLSWVFLVAILKGVQC), serve as a signal peptide directing secretion. Residues 20–44 (EVQLVESGGGLIQPGGSLRLSCAAS) form a framework-1 region. Positions 20–116 (EVQLVESGGG…EDTAVYYCAR (97 aa)) constitute an Ig-like domain. Cysteines 41 and 114 form a disulfide. Positions 45 to 52 (GFTVSSNY) are complementarity-determining-1. The interval 53 to 69 (MSWVRQAPGKGLEWVSV) is framework-2. The segment at 70–76 (IYSCGST) is complementarity-determining-2. The tract at residues 77-114 (YYADSVKGRFTISRDNSKNTLYLQMNSLRAEDTAVYYC) is framework-3. Residues 115–116 (AR) form a complementarity-determining-3 region.

Immunoglobulins are composed of two identical heavy chains and two identical light chains; disulfide-linked.

The protein localises to the secreted. It localises to the cell membrane. Its function is as follows. V region of the variable domain of immunoglobulin heavy chains that participates in the antigen recognition. Immunoglobulins, also known as antibodies, are membrane-bound or secreted glycoproteins produced by B lymphocytes. In the recognition phase of humoral immunity, the membrane-bound immunoglobulins serve as receptors which, upon binding of a specific antigen, trigger the clonal expansion and differentiation of B lymphocytes into immunoglobulins-secreting plasma cells. Secreted immunoglobulins mediate the effector phase of humoral immunity, which results in the elimination of bound antigens. The antigen binding site is formed by the variable domain of one heavy chain, together with that of its associated light chain. Thus, each immunoglobulin has two antigen binding sites with remarkable affinity for a particular antigen. The variable domains are assembled by a process called V-(D)-J rearrangement and can then be subjected to somatic hypermutations which, after exposure to antigen and selection, allow affinity maturation for a particular antigen. The polypeptide is Immunoglobulin heavy variable 3-66 (Homo sapiens (Human)).